We begin with the raw amino-acid sequence, 221 residues long: Carotenogenesis protein CarR (221 aa).

A run of 6 helical transmembrane segments spans residues 56 to 76 (LGLLAAVVLLAVGAVTGPLLL), 79 to 99 (APLLAMLVGTSAVCAWGALSP), 107 to 127 (LGVGLAVVSAAALVLARGAPH), 136 to 156 (VCTVSHLAIGVVPLVVALFAL), 166 to 186 (AVVAGLSVGSTGALLGELACE), and 191 to 211 (HVLSHHLLAWVVITVVLVVIS).

Its subcellular location is the cell inner membrane. Negative regulator of the carotenoid synthesis regulon. It is probably inactivated by protoporphyrin IX in the presence of blue light. Inactivation of CarR leads to loss of negative control over the carotenogenesis protein CarQ. This is Carotenogenesis protein CarR (carR) from Myxococcus xanthus.